Here is a 359-residue protein sequence, read N- to C-terminus: Glucose 1-dehydrogenase (359 aa).

Zn(2+) is bound at residue Cys-39. Thr-41 is a substrate binding site. Zn(2+)-binding residues include His-64 and Glu-65. Residues Glu-116 and Glu-152 each coordinate substrate. A Zn(2+)-binding site is contributed by Glu-152. 183-186 (AGPI) contributes to the NADP(+) binding site.

It belongs to the zinc-containing alcohol dehydrogenase family. Glucose 1-dehydrogenase subfamily. Requires Zn(2+) as cofactor.

The enzyme catalyses D-glucose + NAD(+) = D-glucono-1,5-lactone + NADH + H(+). The catalysed reaction is D-glucose + NADP(+) = D-glucono-1,5-lactone + NADPH + H(+). Catalyzes the NAD(P)(+)-dependent oxidation of D-glucose to D-gluconate via gluconolactone. Can utilize both NAD(+) and NADP(+) as electron acceptor. Is involved in the degradation of glucose through a non-phosphorylative variant of the Entner-Doudoroff pathway. The chain is Glucose 1-dehydrogenase from Methanocella arvoryzae (strain DSM 22066 / NBRC 105507 / MRE50).